The primary structure comprises 338 residues: Glyceraldehyde-3-phosphate dehydrogenase, cytosolic (338 aa).

Residues 14 to 15, Asp36, and Arg83 each bind NAD(+); that span reads RI. Residues 154–156, Thr185, 214–215, and Arg237 contribute to the D-glyceraldehyde 3-phosphate site; these read SCT and TG. The active-site Nucleophile is Cys155. Asn319 lines the NAD(+) pocket.

The protein belongs to the glyceraldehyde-3-phosphate dehydrogenase family. As to quaternary structure, homotetramer.

The protein localises to the cytoplasm. The enzyme catalyses D-glyceraldehyde 3-phosphate + phosphate + NAD(+) = (2R)-3-phospho-glyceroyl phosphate + NADH + H(+). It functions in the pathway carbohydrate degradation; glycolysis; pyruvate from D-glyceraldehyde 3-phosphate: step 1/5. In terms of biological role, key enzyme in glycolysis that catalyzes the first step of the pathway by converting D-glyceraldehyde 3-phosphate (G3P) into 3-phospho-D-glyceroyl phosphate. Essential for the maintenance of cellular ATP levels and carbohydrate metabolism. The protein is Glyceraldehyde-3-phosphate dehydrogenase, cytosolic (GAPC1) of Pisum sativum (Garden pea).